Reading from the N-terminus, the 377-residue chain is Nitric oxide reductase FlRd-NAD(+) reductase (377 aa).

It belongs to the FAD-dependent oxidoreductase family. The cofactor is FAD.

The protein localises to the cytoplasm. The catalysed reaction is 2 reduced [nitric oxide reductase rubredoxin domain] + NAD(+) + H(+) = 2 oxidized [nitric oxide reductase rubredoxin domain] + NADH. The protein operates within nitrogen metabolism; nitric oxide reduction. One of at least two accessory proteins for anaerobic nitric oxide (NO) reductase. Reduces the rubredoxin moiety of NO reductase. This chain is Nitric oxide reductase FlRd-NAD(+) reductase, found in Enterobacter sp. (strain 638).